The sequence spans 1140 residues: Calcium-activated potassium channel slo-1 (1140 aa).

At 1–44 the chain is on the extracellular side; sequence MGEIYSPSQSKGFNQPYGYPMNCNLSRVFMEMTEEDRKCLEERK. Residues 45–65 traverse the membrane as a helical segment; sequence YWCFLLSSITTFCASMILVVI. The Cytoplasmic portion of the chain corresponds to 66–139; sequence WRVVTHLCCQ…LISGQSLTGR (74 aa). Residues 140–161 form a helical membrane-spanning segment; that stretch reads FLVLLVFILSIGSLIIYFYDAS. Over 162–178 the chain is Extracellular; that stretch reads FQNFQVETCIPWQDSPS. The chain crosses the membrane as a helical span at residues 179 to 199; that stretch reads QQIDLGFNIFFLVYFFIRFIA. The Cytoplasmic segment spans residues 200-203; that stretch reads ASDK. Residues 204–224 traverse the membrane as a helical segment; that stretch reads VWFLLEMYSWIDFFTIPPSFV. Over 225–228 the chain is Extracellular; the sequence is AIYL. A helical; Voltage-sensor membrane pass occupies residues 229 to 249; the sequence is QRNWLGFRFLRALRLMTVPDI. The Cytoplasmic segment spans residues 250-264; the sequence is LQYLNILKTSSSIRL. Residues 265–285 form a helical membrane-spanning segment; the sequence is TQLVTIFVAVCLTGAGLVHLL. The Extracellular portion of the chain corresponds to 286-299; the sequence is ENSGDFFKGFINPH. Residues 300–322 constitute an intramembrane region (pore-forming); it reads RITYADSVYFVLVTMSTVGYGDI. A Selectivity for potassium motif is present at residues 316 to 319; sequence TVGY. At 323 to 331 the chain is on the extracellular side; the sequence is YCTTLCGRL. Residues 332–352 form a helical membrane-spanning segment; that stretch reads FMIFFILFGLAMFASYVPEIA. At 353–1140 the chain is on the cytoplasmic side; the sequence is DLIGNRQKYG…LEYEPGKRHF (788 aa). Residues 371–514 form the RCK N-terminal 1 domain; the sequence is KKHIVVCGHI…DWKRGDDVIC (144 aa). A segment S7 region spans residues 520-540; that stretch reads LGFIAQSCLAPGFSTMMANLF. Residues 578–598 form a segment S8 region; the sequence is MTFPEAVDLLFNRLGLLLLAI. Residues 797 to 817 are segment S9; that stretch reads VLNGHVVVCLFADQDSPLIGL. An RCK N-terminal 2 domain is found at 799-953; sequence NGHVVVCLFA…GAKFGTNVPM (155 aa). Residues 955-977 carry the Calcium bowl motif; it reads TELVNDSNVQFLDQDDDDDPDTE. Positions 964, 967, 970, and 972 each coordinate Ca(2+). A segment S10 region spans residues 984–1004; it reads FACGTAFAISVLDSLMSTTYF.

It belongs to the potassium channel family. Calcium-activated (TC 1.A.1.3) subfamily. Slo sub-subfamily. As to quaternary structure, homotetramer; which constitutes the calcium-activated potassium channel. Post-translationally, phosphorylated. Expressed in synaptic regions of the nervous system including in both the nerve ring and nerve cords, as well as in the body-wall and vulval muscle. Expressed broadly in motor neurons. Forms puncta at presynaptic terminals of neurons, muscle excitation sites, and in the dorsal nerve cord.

Its subcellular location is the cell membrane. The protein resides in the synapse. Functionally, potassium channel activated by both membrane depolarization or increase in cytosolic Ca(2+) that mediates export of K(+). Its activation dampens the excitatory events that elevate the cytosolic Ca(2+) concentration and/or depolarize the cell membrane. It therefore contributes to repolarization of the membrane potential. Essential for the regulation of neurotransmitter release at synapses. Regulates longevity and age-associated decline in motor activity in mid-late life, by acting in motor neurons and through daf-16 in the intestine. When clustered in neurons, mediates ethanol-induced suppression of locomotory and egg-laying behaviors. This is Calcium-activated potassium channel slo-1 from Caenorhabditis elegans.